Consider the following 147-residue polypeptide: Hemoglobin subunit beta-2 (147 aa).

In terms of domain architecture, Globin spans 3 to 147 (EWTDSERAII…VVSALGRQYH (145 aa)). 2 residues coordinate heme b: histidine 64 and histidine 93.

The protein belongs to the globin family. In terms of assembly, hb 3 is a heterotetramer of two alpha-2 and two beta-2 chains. As to expression, red blood cells.

Functionally, involved in oxygen transport from gills to the various peripheral tissues. This Boreogadus saida (Polar cod) protein is Hemoglobin subunit beta-2 (hbb2).